The following is a 268-amino-acid chain: Indole-3-glycerol phosphate synthase (268 aa).

It belongs to the TrpC family.

The catalysed reaction is 1-(2-carboxyphenylamino)-1-deoxy-D-ribulose 5-phosphate + H(+) = (1S,2R)-1-C-(indol-3-yl)glycerol 3-phosphate + CO2 + H2O. The protein operates within amino-acid biosynthesis; L-tryptophan biosynthesis; L-tryptophan from chorismate: step 4/5. The polypeptide is Indole-3-glycerol phosphate synthase (Acinetobacter baumannii (strain SDF)).